The chain runs to 293 residues: Ribosomal protein L11 methyltransferase (293 aa).

S-adenosyl-L-methionine is bound by residues Thr145, Gly166, Asp188, and Asn230.

Belongs to the methyltransferase superfamily. PrmA family.

The protein resides in the cytoplasm. The catalysed reaction is L-lysyl-[protein] + 3 S-adenosyl-L-methionine = N(6),N(6),N(6)-trimethyl-L-lysyl-[protein] + 3 S-adenosyl-L-homocysteine + 3 H(+). Functionally, methylates ribosomal protein L11. The protein is Ribosomal protein L11 methyltransferase of Escherichia coli O8 (strain IAI1).